A 152-amino-acid polypeptide reads, in one-letter code: MNEQSEKNNSIQERHTDHSFPEKNCQIGQKQLQQIERQLKCLAFRNPGPQVADFNPETRQQKKKARMSKMNEYFSTKYKIMRKYDKSGRLICNDADLCDCLEKNCLGCFYPCPKCNSNKCGPECRCNRRWVYDAIVTESGEVISTLPFNVPD.

The tract at residues 1–21 is disordered; it reads MNEQSEKNNSIQERHTDHSFP.

The sequence is that of ARL14 effector protein-like (ARL14EPL) from Homo sapiens (Human).